The following is a 622-amino-acid chain: 1,4-alpha-glucan branching enzyme GlgB (622 aa).

Asp-300 (nucleophile) is an active-site residue. Glu-351 functions as the Proton donor in the catalytic mechanism.

Belongs to the glycosyl hydrolase 13 family. GlgB subfamily. As to quaternary structure, monomer.

The enzyme catalyses Transfers a segment of a (1-&gt;4)-alpha-D-glucan chain to a primary hydroxy group in a similar glucan chain.. It functions in the pathway glycan biosynthesis; glycogen biosynthesis. Its function is as follows. Catalyzes the formation of the alpha-1,6-glucosidic linkages in glycogen by scission of a 1,4-alpha-linked oligosaccharide from growing alpha-1,4-glucan chains and the subsequent attachment of the oligosaccharide to the alpha-1,6 position. This chain is 1,4-alpha-glucan branching enzyme GlgB, found in Streptococcus agalactiae serotype V (strain ATCC BAA-611 / 2603 V/R).